We begin with the raw amino-acid sequence, 754 residues long: 5-methyltetrahydropteroyltriglutamate--homocysteine methyltransferase (754 aa).

5-methyltetrahydropteroyltri-L-glutamate contacts are provided by residues R17–K20 and K117. L-homocysteine is bound by residues I431 to S433 and E484. L-methionine is bound by residues I431–S433 and E484. 5-methyltetrahydropteroyltri-L-glutamate-binding positions include R515–C516 and W561. D599 is a binding site for L-homocysteine. D599 is an L-methionine binding site. E605 is a 5-methyltetrahydropteroyltri-L-glutamate binding site. Residues H641, C643, and E665 each coordinate Zn(2+). H694 functions as the Proton donor in the catalytic mechanism. Residue C726 coordinates Zn(2+).

It belongs to the vitamin-B12 independent methionine synthase family. It depends on Zn(2+) as a cofactor.

The enzyme catalyses 5-methyltetrahydropteroyltri-L-glutamate + L-homocysteine = tetrahydropteroyltri-L-glutamate + L-methionine. Its pathway is amino-acid biosynthesis; L-methionine biosynthesis via de novo pathway; L-methionine from L-homocysteine (MetE route): step 1/1. Its function is as follows. Catalyzes the transfer of a methyl group from 5-methyltetrahydrofolate to homocysteine resulting in methionine formation. The protein is 5-methyltetrahydropteroyltriglutamate--homocysteine methyltransferase of Salmonella paratyphi A (strain ATCC 9150 / SARB42).